Here is a 247-residue protein sequence, read N- to C-terminus: NH(3)-dependent NAD(+) synthetase (247 aa).

ATP is bound at residue 29–36; that stretch reads GLSGGVDS. D35 contacts Mg(2+). R112 serves as a coordination point for deamido-NAD(+). Position 132 (T132) interacts with ATP. E137 is a Mg(2+) binding site. Residues K145 and D152 each contribute to the deamido-NAD(+) site. ATP is bound by residues K161 and S183. 233–234 is a deamido-NAD(+) binding site; the sequence is HK.

The protein belongs to the NAD synthetase family. In terms of assembly, homodimer.

The enzyme catalyses deamido-NAD(+) + NH4(+) + ATP = AMP + diphosphate + NAD(+) + H(+). It functions in the pathway cofactor biosynthesis; NAD(+) biosynthesis; NAD(+) from deamido-NAD(+) (ammonia route): step 1/1. Catalyzes the ATP-dependent amidation of deamido-NAD to form NAD. Uses ammonia as a nitrogen source. The chain is NH(3)-dependent NAD(+) synthetase from Archaeoglobus fulgidus (strain ATCC 49558 / DSM 4304 / JCM 9628 / NBRC 100126 / VC-16).